Here is a 397-residue protein sequence, read N- to C-terminus: Geranylgeranyl pyrophosphate synthase AN1592 (397 aa).

Residues 1 to 67 are disordered; sequence MSPPLDSALE…SHDSSASSNI (67 aa). Positions 13–42 are enriched in basic and acidic residues; it reads SEYKETAFPRTEKDPSQYKEHDLVTPEKEI. Residues 52–67 are compositionally biased toward low complexity; sequence SHSSHGSHDSSASSNI. 3 residues coordinate isopentenyl diphosphate: Lys120, Arg123, and His152. The Mg(2+) site is built by Asp159 and Asp163. A dimethylallyl diphosphate-binding site is contributed by Arg168. Arg169 contributes to the isopentenyl diphosphate binding site. Residues Lys247, Thr248, and Gln281 each coordinate dimethylallyl diphosphate. Asp284 serves as a coordination point for Mg(2+). Dimethylallyl diphosphate-binding residues include Asn288, Lys298, and Lys308.

This sequence belongs to the FPP/GGPP synthase family. Mg(2+) is required as a cofactor.

The catalysed reaction is isopentenyl diphosphate + dimethylallyl diphosphate = (2E)-geranyl diphosphate + diphosphate. The enzyme catalyses isopentenyl diphosphate + (2E)-geranyl diphosphate = (2E,6E)-farnesyl diphosphate + diphosphate. It catalyses the reaction isopentenyl diphosphate + (2E,6E)-farnesyl diphosphate = (2E,6E,10E)-geranylgeranyl diphosphate + diphosphate. It functions in the pathway secondary metabolite biosynthesis; terpenoid biosynthesis. Functionally, geranylgeranyl pyrophosphate synthase; part of the gene cluster that mediates the biosynthesis of the diterpene ent-pimara-8(14),15-diene (PD). Within the cluster, the HMG-CoA reductase AN1593 functions in the mevalonate pathway, which produces isoprenoid precursors. The geranylgeranyl pyrophosphate (GGPP) synthase AN1592 is needed in the formation of GGPP, the precursor for diterpenes. Lastly, the pimaradiene synthase pbcA performs the 2 cyclization steps that convert GGPP to ent-pimara-8(14),15-diene. The putative roles of the remaining cluster enzymes in ent-pimara-8(14),15-diene biosynthesis is unclear. The cytochrome P450 monooxygenase AN1598, the glutathione S-transferase AN1595, the oxidoreductases AN1596 and AN1597 probably function as decorative enzymes. It is possible that in biological conditions the compound is oxidized to ent-pimara-8(14),15-dien-19-oic acid, which is a bioactive diterpene compound predominant in many plant extracts. In Emericella nidulans (strain FGSC A4 / ATCC 38163 / CBS 112.46 / NRRL 194 / M139) (Aspergillus nidulans), this protein is Geranylgeranyl pyrophosphate synthase AN1592.